We begin with the raw amino-acid sequence, 454 residues long: Kynurenine--oxoglutarate transaminase 3 (454 aa).

Gly71 provides a ligand contact to substrate. An N6-acetyllysine; alternate modification is found at Lys116. At Lys116 the chain carries N6-succinyllysine; alternate. A substrate-binding site is contributed by Asn218. At Lys280 the chain carries N6-(pyridoxal phosphate)lysine. A substrate-binding site is contributed by Arg429.

This sequence belongs to the class-I pyridoxal-phosphate-dependent aminotransferase family. In terms of assembly, homodimer. Pyridoxal 5'-phosphate is required as a cofactor.

The catalysed reaction is L-kynurenine + 2-oxoglutarate = kynurenate + L-glutamate + H2O. The enzyme catalyses L-kynurenine + glyoxylate = kynurenate + glycine + H2O. It catalyses the reaction 3-hydroxy-L-kynurenine + glyoxylate = xanthurenate + glycine + H2O. It carries out the reaction an S-substituted L-cysteine + H2O = a thiol + pyruvate + NH4(+). The protein operates within amino-acid degradation; L-kynurenine degradation; kynurenate from L-kynurenine: step 1/2. In terms of biological role, catalyzes the irreversible transamination of the L-tryptophan metabolite L-kynurenine to form kynurenic acid (KA), an intermediate in the tryptophan catabolic pathway which is also a broad spectrum antagonist of the three ionotropic excitatory amino acid receptors among others. May catalyze the beta-elimination of S-conjugates and Se-conjugates of L-(seleno)cysteine, resulting in the cleavage of the C-S or C-Se bond. Has transaminase activity towards L-kynurenine, tryptophan, phenylalanine, serine, cysteine, methionine, histidine, glutamine and asparagine with glyoxylate as an amino group acceptor (in vitro). Has lower activity with 2-oxoglutarate as amino group acceptor (in vitro). In Rattus norvegicus (Rat), this protein is Kynurenine--oxoglutarate transaminase 3.